Consider the following 372-residue polypeptide: tRNA pseudouridine synthase D (372 aa).

Catalysis depends on D85, which acts as the Nucleophile. The TRUD domain maps to 160–330 (GFTNYFGYQR…MQGSRRFMWG (171 aa)).

This sequence belongs to the pseudouridine synthase TruD family.

The catalysed reaction is uridine(13) in tRNA = pseudouridine(13) in tRNA. Responsible for synthesis of pseudouridine from uracil-13 in transfer RNAs. The chain is tRNA pseudouridine synthase D from Campylobacter jejuni (strain RM1221).